Reading from the N-terminus, the 1517-residue chain is uncharacterized protein (1517 aa).

The segment covering 1-13 (MNQFPNQPGNFGQ) has biased composition (polar residues). A disordered region spans residues 1–26 (MNQFPNQPGNFGQNYYKPVQGSIPAN). N35, N40, and N76 each carry an N-linked (GlcNAc...) asparagine glycan. The next 5 membrane-spanning stretches (helical) occupy residues 231–251 (AIDFVVSLFGCFIAGVVAVPI), 397–417 (AIGLILGVLHTVFSGYTTVWC), 510–530 (FVPLLCLPEHGGMVISMKDWI), 612–632 (PNIVGEIWVDSPSLSGGFFAL), and 720–740 (VFDCSAFDIFVNSEHLPVVLL). Residue N917 is glycosylated (N-linked (GlcNAc...) asparagine). Helical transmembrane passes span 956–976 (FVYALYACFYLGLIPIPVPPL), 985–1005 (VPAFLFLIKHYYVSAVLVNSE), 1051–1071 (VKLDPICLDPAFPALVWAFWS), and 1114–1134 (GIGFFHTCLMGVFLGTTTYLL). N-linked (GlcNAc...) asparagine glycosylation is present at N1178. A helical transmembrane segment spans residues 1261-1281 (PYALPLLDSGMVPVSTQLAIV). N1321 carries an N-linked (GlcNAc...) asparagine glycan. 2 helical membrane-spanning segments follow: residues 1353–1373 (APVVDMQLLYVLGPIGETFEV) and 1408–1428 (VVVVIEALGQDFLAAIVPVVI).

To S.pombe SpAC22F3.04.

It is found in the membrane. This is an uncharacterized protein from Schizosaccharomyces pombe (strain 972 / ATCC 24843) (Fission yeast).